Reading from the N-terminus, the 320-residue chain is N-acetylneuraminate lyase (320 aa).

Aceneuramate contacts are provided by Thr-51 and Thr-52. Tyr-143 functions as the Proton donor in the catalytic mechanism. Catalysis depends on Lys-173, which acts as the Schiff-base intermediate with substrate. 5 residues coordinate aceneuramate: Ser-175, Gly-199, Asp-201, Glu-202, and Ser-218.

Belongs to the DapA family. NanA subfamily. In terms of assembly, homotetramer.

The protein localises to the cytoplasm. The enzyme catalyses aceneuramate = aldehydo-N-acetyl-D-mannosamine + pyruvate. Its pathway is amino-sugar metabolism; N-acetylneuraminate degradation. In terms of biological role, catalyzes the cleavage of N-acetylneuraminic acid (sialic acid) to form pyruvate and N-acetylmannosamine via a Schiff base intermediate. It prevents sialic acids from being recycled and returning to the cell surface. Involved in the N-glycolylneuraminic acid (Neu5Gc) degradation pathway. The chain is N-acetylneuraminate lyase from Pongo abelii (Sumatran orangutan).